The following is a 253-amino-acid chain: Phosphoglycerate mutase 2 (253 aa).

A Phosphothreonine modification is found at Thr-3. Residues 10–17 (RHGESTWN), 23–24 (CG), Arg-62, 89–92 (ERHY), Lys-100, and 116–117 (RR) contribute to the substrate site. Catalysis depends on His-11, which acts as the Tele-phosphohistidine intermediate. Ser-14 carries the phosphoserine modification. Glu-89 serves as the catalytic Proton donor/acceptor. At Ser-118 the chain carries Phosphoserine. A phosphotyrosine mark is found at Tyr-132 and Tyr-133. Position 135 is a phosphoserine (Ser-135). The residue at position 152 (Thr-152) is a Phosphothreonine. A substrate-binding site is contributed by 187 to 188 (GN).

The protein belongs to the phosphoglycerate mutase family. BPG-dependent PGAM subfamily. As to quaternary structure, homodimer. Interacts with ENO1. Expressed in the heart and muscle. Not found in the liver and brain.

It catalyses the reaction (2R)-2-phosphoglycerate = (2R)-3-phosphoglycerate. The enzyme catalyses (2R)-3-phospho-glyceroyl phosphate = (2R)-2,3-bisphosphoglycerate + H(+). Its function is as follows. Interconversion of 3- and 2-phosphoglycerate with 2,3-bisphosphoglycerate as the primer of the reaction. Can also catalyze the reaction of EC 5.4.2.4 (synthase), but with a reduced activity. The chain is Phosphoglycerate mutase 2 (PGAM2) from Homo sapiens (Human).